Here is a 968-residue protein sequence, read N- to C-terminus: Translation initiation factor IF-2 (968 aa).

Low complexity predominate over residues 305-319 (KPAAAAGAPGAPGAA). Positions 305–376 (KPAAAAGAPG…NDRDARPEST (72 aa)) are disordered. The tr-type G domain occupies 468–635 (PRAPVVTVMG…QVLLQAEVLE (168 aa)). The segment at 477 to 484 (GHVDHGKT) is G1. 477-484 (GHVDHGKT) is a binding site for GTP. The interval 502 to 506 (GITQH) is G2. Residues 523-526 (DTPG) form a G3 region. GTP is bound by residues 523–527 (DTPGH) and 577–580 (NKID). The G4 stretch occupies residues 577 to 580 (NKID). The tract at residues 613-615 (SAR) is G5.

Belongs to the TRAFAC class translation factor GTPase superfamily. Classic translation factor GTPase family. IF-2 subfamily.

It is found in the cytoplasm. Functionally, one of the essential components for the initiation of protein synthesis. Protects formylmethionyl-tRNA from spontaneous hydrolysis and promotes its binding to the 30S ribosomal subunits. Also involved in the hydrolysis of GTP during the formation of the 70S ribosomal complex. The chain is Translation initiation factor IF-2 from Polaromonas sp. (strain JS666 / ATCC BAA-500).